Reading from the N-terminus, the 230-residue chain is Small ribosomal subunit protein uS7m (230 aa).

It belongs to the universal ribosomal protein uS7 family. As to quaternary structure, part of the small ribosomal subunit.

Its subcellular location is the mitochondrion. Functionally, one of the primary rRNA binding proteins, it binds directly to 18S rRNA where it nucleates assembly of the head domain of the small subunit. The sequence is that of Small ribosomal subunit protein uS7m (RPS7) from Marchantia polymorpha (Common liverwort).